Here is a 615-residue protein sequence, read N- to C-terminus: Probable methylmalonyl-CoA mutase small subunit (615 aa).

This sequence belongs to the methylmalonyl-CoA mutase family. Heterodimer of an alpha and a beta chain. Adenosylcob(III)alamin serves as cofactor.

The catalysed reaction is (R)-methylmalonyl-CoA = succinyl-CoA. Its pathway is metabolic intermediate metabolism; propanoyl-CoA degradation; succinyl-CoA from propanoyl-CoA: step 3/3. Its function is as follows. Catalyzes the isomerization of succinyl-CoA to methylmalonyl-CoA during synthesis of propionate from tricarboxylic acid-cycle intermediates. This is Probable methylmalonyl-CoA mutase small subunit (mutA) from Mycobacterium bovis (strain ATCC BAA-935 / AF2122/97).